A 214-amino-acid chain; its full sequence is Pyridoxine/pyridoxamine 5'-phosphate oxidase (214 aa).

Residues 8-11 (RINY) and Lys66 each bind substrate. Residues 61–66 (RIVLIK), 76–77 (FT), Arg82, Lys83, and Gln105 contribute to the FMN site. Residues Tyr123, Arg127, and Ser131 each contribute to the substrate site. Residues 140-141 (QS) and Trp184 each bind FMN. 190–192 (RLH) contributes to the substrate binding site. Arg194 lines the FMN pocket.

It belongs to the pyridoxamine 5'-phosphate oxidase family. As to quaternary structure, homodimer. The cofactor is FMN.

It carries out the reaction pyridoxamine 5'-phosphate + O2 + H2O = pyridoxal 5'-phosphate + H2O2 + NH4(+). The enzyme catalyses pyridoxine 5'-phosphate + O2 = pyridoxal 5'-phosphate + H2O2. It functions in the pathway cofactor metabolism; pyridoxal 5'-phosphate salvage; pyridoxal 5'-phosphate from pyridoxamine 5'-phosphate: step 1/1. The protein operates within cofactor metabolism; pyridoxal 5'-phosphate salvage; pyridoxal 5'-phosphate from pyridoxine 5'-phosphate: step 1/1. Functionally, catalyzes the oxidation of either pyridoxine 5'-phosphate (PNP) or pyridoxamine 5'-phosphate (PMP) into pyridoxal 5'-phosphate (PLP). This is Pyridoxine/pyridoxamine 5'-phosphate oxidase from Burkholderia orbicola (strain MC0-3).